Reading from the N-terminus, the 430-residue chain is Carbamoyl phosphate synthase arginine-specific small chain (430 aa).

Residues Met-1 to Leu-9 constitute a mitochondrion transit peptide. The Glutamine amidotransferase type-1 domain occupies His-219 to Ser-407. Cys-296 acts as the Nucleophile in catalysis. Active-site residues include His-380 and Glu-382.

The protein belongs to the CarA family. As to quaternary structure, heterodimer composed of 2 chains; the small (or glutamine) chain promotes the hydrolysis of glutamine to ammonia, which is used by the large (or ammonia) chain to synthesize carbamoyl phosphate.

It localises to the mitochondrion matrix. The catalysed reaction is hydrogencarbonate + L-glutamine + 2 ATP + H2O = carbamoyl phosphate + L-glutamate + 2 ADP + phosphate + 2 H(+). It carries out the reaction L-glutamine + H2O = L-glutamate + NH4(+). It functions in the pathway amino-acid biosynthesis; L-arginine biosynthesis; carbamoyl phosphate from bicarbonate: step 1/1. Its function is as follows. Small subunit of the arginine-specific carbamoyl phosphate synthase (CPSase). CPSase catalyzes the formation of carbamoyl phosphate from the ammonia moiety of glutamine, carbonate, and phosphate donated by ATP, the first step of the arginine biosynthetic pathway. The small subunit (glutamine amidotransferase) binds and cleaves glutamine to supply the large subunit with the substrate ammonia. This is Carbamoyl phosphate synthase arginine-specific small chain (CPA1) from Candida albicans (strain SC5314 / ATCC MYA-2876) (Yeast).